The chain runs to 192 residues: Cytochrome c4 (192 aa).

Cytochrome c domains lie at 12 to 90 (GDPQ…ATQP) and 99 to 191 (ELAS…QGLS). Residues Cys25, Cys28, His29, Cys120, Cys123, and His124 each coordinate heme c.

Post-translationally, binds 2 heme c groups covalently per subunit.

The protein resides in the periplasm. Diheme, high potential cytochrome c believed to be an intermediate electron donor in an anaerobic electron transport chain. The polypeptide is Cytochrome c4 (Thiocapsa roseopersicina).